Consider the following 1075-residue polypeptide: Nuclear factor of activated T-cells, cytoplasmic 3 (1075 aa).

At threonine 2 the chain carries N-acetylthreonine. The disordered stretch occupies residues phenylalanine 18–glutamate 37. The calcineurin-binding stretch occupies residues proline 109–threonine 114. A disordered region spans residues leucine 205 to threonine 306. 2 consecutive repeat copies span residues serine 207–glutamate 223 and serine 236–glutamate 252. The tract at residues serine 207 to aspartate 308 is 3 X SP repeats. The segment covering serine 236–asparagine 253 has biased composition (polar residues). Over residues serine 256 to proline 270 the composition is skewed to low complexity. The short motif at lysine 273 to arginine 275 is the Nuclear localization signal element. Copy 3 of the repeat occupies serine 292–aspartate 308. Phosphoserine occurs at positions 344 and 372. In terms of domain architecture, RHD spans serine 415 to alanine 596. Residues arginine 444–glycine 451 mediate DNA binding. The Nuclear localization signal signature appears at lysine 686–lysine 688. 2 disordered regions span residues aspartate 711–serine 739 and serine 887–alanine 988. 2 stretches are compositionally biased toward polar residues: residues alanine 724–serine 739 and serine 887–proline 912. Low complexity-rich tracts occupy residues glycine 916 to leucine 939 and proline 949 to threonine 967. A compositionally biased stretch (polar residues) spans histidine 970–threonine 981. The short motif at threonine 1032 to glycine 1041 is the Nuclear export signal element. The interval valine 1049 to leucine 1075 is disordered. A phosphoserine mark is found at serine 1063 and serine 1066.

As to quaternary structure, NFATC proteins bind to DNA as monomers. Member of the multicomponent NFATC transcription complex that consists of at least two components, a pre-existing cytoplasmic component NFATC2 and an inducible nuclear component NFATC1. Other members such as NFATC4, or members of the activating protein-1 family, MAF, GATA4 and Cbp/p300 can also bind the complex. Component of a promoter-binding complex composed of STAT3, NFATC3 and NFATC4; complex formation is enhanced by calcineurin. Interacts with TRIM17; this interaction prevents NFATC3 nuclear localization. Interacts with and ubiquitinated by STUB1/CHIP; HSPA1A/HSP70 is required as a co-chaperone. Post-translationally, ubiquitinated by STUB1/CHIP, leading to proteasomal degradation. In terms of processing, phosphorylated by NFATC-kinase; dephosphorylated by calcineurin. As to expression, predominantly expressed in thymus and is also found in peripheral blood leukocytes and kidney. In terms of tissue distribution, predominantly expressed in skeletal muscle. Also found weakly expressed in the thymus, kidney, testis, spleen, prostate, ovary, small intestine, heart, placenta and pancreas. Expressed in thymus and kidney. As to expression, expressed in thymus and skeletal muscle.

The protein resides in the cytoplasm. It is found in the nucleus. Functionally, acts as a regulator of transcriptional activation. Binds to the TNFSF11/RANKL promoter region and promotes TNFSF11 transcription. Binding to the TNFSF11 promoter region is increased by high levels of Ca(2+) which induce NFATC3 expression and may lead to regulation of TNFSF11 expression in osteoblasts. Plays a role in promoting mesenteric arterial wall remodeling in response to the intermittent hypoxia-induced increase in EDN1 and ROCK signaling. As a result NFATC3 colocalizes with F-actin filaments, translocates to the nucleus and promotes transcription of the smooth muscle hypertrophy and differentiation marker ACTA2. Promotes lipopolysaccharide-induced apoptosis and hypertrophy in cardiomyocytes. Following JAK/STAT signaling activation and as part of a complex with NFATC4 and STAT3, binds to the alpha-beta E4 promoter region of CRYAB and activates transcription in cardiomyocytes. In conjunction with NFATC4, involved in embryonic heart development via maintenance of cardiomyocyte survival, proliferation and differentiation. Plays a role in the inducible expression of cytokine genes in T-cells, especially in the induction of the IL-2. Required for thymocyte maturation during DN3 to DN4 transition and during positive selection. Positively regulates macrophage-derived polymicrobial clearance, via binding to the promoter region and promoting transcription of NOS2 resulting in subsequent generation of nitric oxide. Involved in Ca(2+)-mediated transcriptional responses upon Ca(2+) influx via ORAI1 CRAC channels. In Homo sapiens (Human), this protein is Nuclear factor of activated T-cells, cytoplasmic 3.